An 873-amino-acid polypeptide reads, in one-letter code: V-type proton ATPase 116 kDa subunit a 2 (873 aa).

Over 1 to 407 the chain is Cytoplasmic; that stretch reads MGSLSRSEEM…TIITFPFLFS (407 aa). Residues 408–428 form a helical membrane-spanning segment; the sequence is CMFGDLGHGCIMLMAGLWFVL. Over 429–445 the chain is Lumenal; sequence REKNLQARNIKDEIFNM. A helical membrane pass occupies residues 446–466; it reads FFGGRYIILLMGLFSIHAGII. At 467 to 543 the chain is on the cytoplasmic side; that stretch reads YNDMFAKSFN…NKLNFLNSMK (77 aa). A helical transmembrane segment spans residues 544-564; the sequence is MKLSVILGISQMTFGVILSFF. N-linked (GlcNAc...) asparagine glycosylation is found at Asn565 and Asn569. The Lumenal portion of the chain corresponds to 565-574; sequence NHTYNKSKID. A helical membrane pass occupies residues 575–595; the sequence is IFTVFIPQMLFMGCIFMYLCL. At 596 to 614 the chain is on the cytoplasmic side; that stretch reads QIILKWLFFWTKEATVFGQ. Residues 615–635 traverse the membrane as a helical segment; sequence IYPGSHCAPSLLIGLINMFMM. At 636 to 668 the chain is on the lumenal side; the sequence is KDRNAGFVVDGGKVNGEYREVETCYLSQWYPGQ. A helical membrane pass occupies residues 669 to 689; the sequence is SVIEMILVVIAVICVPVMLFG. The Cytoplasmic segment spans residues 690–785; sequence KPIHHVMQQK…LWALSLAHAQ (96 aa). A helical membrane pass occupies residues 786–806; it reads LSEVLWHMVFVTGGLGISGTA. Position 807 (Gly807) is a topological domain, lumenal. A helical membrane pass occupies residues 808–828; sequence FIAVYVVFFIFFVLTISILVL. Residues 829–873 are Cytoplasmic-facing; sequence MEGLSAFLHTLRLHWVEFQSKFYLGLGYPFVPYSFKTALQEAEAA.

Belongs to the V-ATPase 116 kDa subunit family. V-ATPase is a heteromultimeric enzyme made up of two complexes: the ATP-hydrolytic V1 complex and the proton translocation V0 complex. The V1 complex consists of three catalytic AB heterodimers that form a heterohexamer, three peripheral stalks each consisting of EG heterodimers, one central rotor including subunits D and F, and the regulatory subunits C and H. The proton translocation complex V0 consists of the proton transport subunit a, a ring of proteolipid subunits c9c'', rotary subunit d, subunits e and f, and the accessory subunits vah-19/Ac45 and vah-20/PRR. Interacts with V-type proton ATPase subunit C vha-11. In terms of tissue distribution, expressed in the H-shaped excretory cell (at protein level). Expressed in hypodermal cells around the vulva. Expressed in the main epidermal syncytium. Expressed in the sheath cells associated with head and tail sensory organs; specifically, expressed in the apical sheath cells of the amphids and CEP neuron and in the sheath cells of the OLQ sensory organ.

The protein localises to the apical cell membrane. The protein resides in the endosome. It is found in the multivesicular body membrane. Functionally, subunit of the V0 complex of vacuolar(H+)-ATPase (V-ATPase), a multisubunit enzyme composed of a peripheral complex (V1) that hydrolyzes ATP and a membrane integral complex (V0) that translocates protons. V-ATPase is responsible for acidifying and maintaining the pH of intracellular compartments and in some cell types, is targeted to the plasma membrane, where it is responsible for acidifying the extracellular environment. Involved in the assembly of the V-ATPase complex. The V-ATPase is required for the function of the excretory canal. Independently of the V1 complex, the V0 complex of the V-ATPase is required for multivesicular body membrane fusion with the apical membrane of the epidermal cells during exosome release and thus regulates the release of cuticle components such as Hedgehog-related peptide wrt-2 but not collagen. Also, in the epidermis, regulates the trafficking of che-14 and rdy-2. Regulates the secretion of granular material found in the amphid channel and in controlling osmoregulation in the amphid pocket. The chain is V-type proton ATPase 116 kDa subunit a 2 from Caenorhabditis elegans.